The following is a 589-amino-acid chain: Transcription factor 4 (589 aa).

Disordered regions lie at residues 1-124, 138-163, 184-239, 254-297, 384-492, and 556-589; these read MTSR…SSSK, DGHH…MLGN, PSHS…SQTG, HTNN…EGPL, SLLP…MANN, and KRRE…MGQM. 2 positions are modified to phosphoserine: Ser8 and Ser13. Over residues 56–74 the composition is skewed to polar residues; the sequence is GTLSPTKPGSQYYPYSSNN. The interval 136–157 is leucine-zipper; the sequence is MQDGHHSSDPWSSSSGMNQPGY. Residues 184–224 show a composition bias toward polar residues; sequence PSHSSADINSSLPPMSTFHRSGTNHYSTSSCTPPANGTDSI. Residues 255 to 266 are compositionally biased toward low complexity; that stretch reads TNNSFSSNPSTP. The span at 283-292 shows a compositional bias: polar residues; the sequence is NGGQASSSPN. A Phosphoserine modification is found at Ser290. The class A specific domain stretch occupies residues 380–403; that stretch reads RGSHSLLPNQVPVPQLPVQSATSP. Low complexity-rich tracts occupy residues 385–398 and 421–430; these read LLPN…LPVQ and GQSVSSGSSE. The residue at position 433 (Ser433) is a Phosphoserine. Basic and acidic residues-rich tracts occupy residues 445 to 461 and 477 to 492; these read KSSE…DIKS and PEQK…MANN. The bHLH domain maps to 486–539; the sequence is ERRMANNARERLRVRDINEAFKELGRMVQLHLKSDKPQTKLLILHQAVAVILSL.

In terms of assembly, efficient DNA binding requires dimerization with another bHLH protein. Forms homo- or heterooligomers with myogenin. Interacts with HIVEP2. Interacts with NEUROD2. Interacts with AGBL1.

It localises to the nucleus. Its function is as follows. Transcription factor that binds to the immunoglobulin enhancer Mu-E5/KE5-motif. Involved in the initiation of neuronal differentiation. Activates transcription by binding to the E box (5'-CANNTG-3'). Binds to the E-box present in the somatostatin receptor 2 initiator element (SSTR2-INR) to activate transcription. Interacts with the CCAAT displacement protein (CDP2) to bind the tyrosine hydroxylase enhancer. The chain is Transcription factor 4 (Tcf4) from Rattus norvegicus (Rat).